A 311-amino-acid chain; its full sequence is Heme A synthase (311 aa).

The Cytoplasmic portion of the chain corresponds to 1–6 (MQRFIK). A helical transmembrane segment spans residues 7-27 (WLAVITSLDLLIVLLGGALVT). Over 28 to 62 (KTGSGQGCGKSWPLCNGEFVPSNLSMETIIELSHR) the chain is Extracellular. Cysteines 35 and 42 form a disulfide. The active site involves E58. Residue H61 coordinates heme o. Residues 63 to 83 (LTSGSAGILVTLLCILSWKYY) form a helical membrane-spanning segment. Over 84–91 (KHVRETKT) the chain is Cytoplasmic. A helical membrane pass occupies residues 92–112 (LAILSFVFLVAQALMGAAAVV). Residues 113–121 (WGQMPAVLA) are Extracellular-facing. Residues 122-142 (IHFGISLISFASVILLTCLIF) traverse the membrane as a helical segment. Residue H123 participates in heme o binding. The Cytoplasmic portion of the chain corresponds to 143 to 159 (EIDQKFDARSLIMDKKM). The helical transmembrane segment at 160-180 (KFHIYGVTIYCYLVVYTGALV) threads the bilayer. Over 181–211 (RHERASLACPDFPLCSKNRPMPTQLHEWVQM) the chain is Extracellular. C189 and C195 are disulfide-bonded. A helical membrane pass occupies residues 212–232 (GHRLAAMLIFVWILYAMILAI). H213 contributes to the heme b binding site. Residues 233-243 (RHYKQQPVVYW) lie on the Cytoplasmic side of the membrane. Residues 244-264 (GWIISFILVTLQAIVGILVVF) traverse the membrane as a helical segment. Topologically, residues 265 to 271 (TNASLAM) are extracellular. A helical membrane pass occupies residues 272–292 (ALLHSLFISCLFAVLCYLVML). H275 provides a ligand contact to heme b. Residues 293-311 (GTRSKVNAKEAASTSKQTK) lie on the Cytoplasmic side of the membrane.

This sequence belongs to the COX15/CtaA family. Type 1 subfamily. As to quaternary structure, interacts with CtaB. It depends on heme b as a cofactor.

It is found in the cell membrane. It catalyses the reaction Fe(II)-heme o + 2 A + H2O = Fe(II)-heme a + 2 AH2. It functions in the pathway porphyrin-containing compound metabolism; heme A biosynthesis; heme A from heme O: step 1/1. Catalyzes the conversion of heme O to heme A by two successive hydroxylations of the methyl group at C8. The first hydroxylation forms heme I, the second hydroxylation results in an unstable dihydroxymethyl group, which spontaneously dehydrates, resulting in the formyl group of heme A. This is Heme A synthase from Bacillus cereus (strain 03BB102).